The sequence spans 414 residues: Succinylornithine transaminase (414 aa).

Lys-260 is subject to N6-(pyridoxal phosphate)lysine.

The protein belongs to the class-III pyridoxal-phosphate-dependent aminotransferase family. AstC subfamily. Pyridoxal 5'-phosphate is required as a cofactor.

The catalysed reaction is N(2)-succinyl-L-ornithine + 2-oxoglutarate = N-succinyl-L-glutamate 5-semialdehyde + L-glutamate. Its pathway is amino-acid degradation; L-arginine degradation via AST pathway; L-glutamate and succinate from L-arginine: step 3/5. Catalyzes the transamination of N(2)-succinylornithine and alpha-ketoglutarate into N(2)-succinylglutamate semialdehyde and glutamate. Can also act as an acetylornithine aminotransferase. The polypeptide is Succinylornithine transaminase (Yersinia enterocolitica serotype O:8 / biotype 1B (strain NCTC 13174 / 8081)).